Reading from the N-terminus, the 704-residue chain is Polyribonucleotide nucleotidyltransferase (704 aa).

The Mg(2+) site is built by Asp491 and Asp497. Positions 558–617 constitute a KH domain; it reads PNYAVIEINSDKIRDVIGKGGATIRQLTEDTGAVIDIDDNGTIRIFGENKAATKEAIRQI. In terms of domain architecture, S1 motif spans 627–695; the sequence is GKVYKGTVAR…NRGRIKLTMK (69 aa).

It belongs to the polyribonucleotide nucleotidyltransferase family. In terms of assembly, component of the RNA degradosome, which is a multiprotein complex involved in RNA processing and mRNA degradation. Requires Mg(2+) as cofactor.

The protein localises to the cytoplasm. It carries out the reaction RNA(n+1) + phosphate = RNA(n) + a ribonucleoside 5'-diphosphate. Functionally, involved in mRNA degradation. Catalyzes the phosphorolysis of single-stranded polyribonucleotides processively in the 3'- to 5'-direction. This Psychrobacter sp. (strain PRwf-1) protein is Polyribonucleotide nucleotidyltransferase.